The following is a 139-amino-acid chain: Ribulose bisphosphate carboxylase small subunit (139 aa).

Belongs to the RuBisCO small chain family. In terms of assembly, heterohexadecamer of 8 large and 8 small subunits.

The protein localises to the plastid. Its subcellular location is the chloroplast. Its function is as follows. RuBisCO catalyzes two reactions: the carboxylation of D-ribulose 1,5-bisphosphate, the primary event in carbon dioxide fixation, as well as the oxidative fragmentation of the pentose substrate in the photorespiration process. Both reactions occur simultaneously and in competition at the same active site. Although the small subunit is not catalytic it is essential for maximal activity. This Cylindrotheca sp. (strain N1) (Marine diatom) protein is Ribulose bisphosphate carboxylase small subunit.